The following is a 584-amino-acid chain: Methionine--tRNA ligase (584 aa).

The short motif at 12 to 22 (PYANGDLHLGH) is the 'HIGH' region element. C144, C147, C157, and C160 together coordinate Zn(2+). The 'KMSKS' region signature appears at 334–338 (QFSTS). T337 contributes to the ATP binding site. Residues 541 to 563 (EGRDRWAPSELEAGRPLPPPQPL) are disordered.

Belongs to the class-I aminoacyl-tRNA synthetase family. MetG type 1 subfamily. Monomer. The cofactor is Zn(2+).

It localises to the cytoplasm. The catalysed reaction is tRNA(Met) + L-methionine + ATP = L-methionyl-tRNA(Met) + AMP + diphosphate. In terms of biological role, is required not only for elongation of protein synthesis but also for the initiation of all mRNA translation through initiator tRNA(fMet) aminoacylation. The sequence is that of Methionine--tRNA ligase from Thermomicrobium roseum (strain ATCC 27502 / DSM 5159 / P-2).